We begin with the raw amino-acid sequence, 314 residues long: Malate dehydrogenase (314 aa).

9–15 (IGVGNVG) provides a ligand contact to NAD(+). Positions 84 and 90 each coordinate substrate. Residues N97 and 120 to 122 (ISN) contribute to the NAD(+) site. Positions 122 and 153 each coordinate substrate. The Proton acceptor role is filled by H177.

It belongs to the LDH/MDH superfamily.

It catalyses the reaction (S)-malate + NAD(+) = oxaloacetate + NADH + H(+). Catalyzes the reversible oxidation of malate to oxaloacetate. The sequence is that of Malate dehydrogenase from Aliarcobacter butzleri (strain RM4018) (Arcobacter butzleri).